We begin with the raw amino-acid sequence, 302 residues long: Ubiquitin thioesterase OTU1 (302 aa).

Residues 5 to 83 (RCKARSGTQP…IVEEDTSKPS (79 aa)) are UBX-like. Residues 103-228 (LARRVVPADN…GIHYDPLERK (126 aa)) form the OTU domain. Positions 108–114 (VPADNSC) are cys-loop. D111 is an active-site residue. C114 (nucleophile) is an active-site residue. The segment at 167–177 (IRREETWGGAI) is variable-loop. Positions 217 to 221 (YDGIH) are his-loop. I220 is a substrate binding site. H221 is a catalytic residue. The S2 site stretch occupies residues 245–250 (DVVLAQ). A C2H2-type zinc finger spans residues 272 to 296 (LRCMVCQKGLTGQVEAREHAKETGH). Residue H296 is part of the active site.

It is found in the cytoplasm. It carries out the reaction Thiol-dependent hydrolysis of ester, thioester, amide, peptide and isopeptide bonds formed by the C-terminal Gly of ubiquitin (a 76-residue protein attached to proteins as an intracellular targeting signal).. Its function is as follows. Hydrolase that can remove conjugated ubiquitin from proteins and participates in endoplasmic reticulum-associated degradation (ERAD) for misfolded lumenal proteins. May act by triming the ubiquitin chain on the associated substrate to facilitate their threading through the VCP/p97 pore. Ubiquitin moieties on substrates may present a steric impediment to the threading process when the substrate is transferred to the VCP pore and threaded through VCP's axial channel. Mediates deubiquitination of 'Lys-27'-, 'Lys-29'- and 'Lys-33'-linked polyubiquitin chains. Also able to hydrolyze 'Lys-11'-linked ubiquitin chains. Cleaves both polyubiquitin and di-ubiquitin. The chain is Ubiquitin thioesterase OTU1 (YOD1) from Gallus gallus (Chicken).